A 218-amino-acid chain; its full sequence is Octanoyltransferase (218 aa).

The BPL/LPL catalytic domain occupies 27–210 (AGAEETLYLL…QFRAIFADST (184 aa)). Residues 72-79 (RGGNITCH), 139-141 (SIG), and 152-154 (GFA) contribute to the substrate site. The active-site Acyl-thioester intermediate is cysteine 170.

The protein belongs to the LipB family.

It is found in the cytoplasm. It catalyses the reaction octanoyl-[ACP] + L-lysyl-[protein] = N(6)-octanoyl-L-lysyl-[protein] + holo-[ACP] + H(+). It functions in the pathway protein modification; protein lipoylation via endogenous pathway; protein N(6)-(lipoyl)lysine from octanoyl-[acyl-carrier-protein]: step 1/2. Its function is as follows. Catalyzes the transfer of endogenously produced octanoic acid from octanoyl-acyl-carrier-protein onto the lipoyl domains of lipoate-dependent enzymes. Lipoyl-ACP can also act as a substrate although octanoyl-ACP is likely to be the physiological substrate. In Nitratidesulfovibrio vulgaris (strain DSM 19637 / Miyazaki F) (Desulfovibrio vulgaris), this protein is Octanoyltransferase.